We begin with the raw amino-acid sequence, 166 residues long: Large ribosomal subunit protein uL10 (166 aa).

This sequence belongs to the universal ribosomal protein uL10 family. Part of the ribosomal stalk of the 50S ribosomal subunit. The N-terminus interacts with L11 and the large rRNA to form the base of the stalk. The C-terminus forms an elongated spine to which L12 dimers bind in a sequential fashion forming a multimeric L10(L12)X complex.

In terms of biological role, forms part of the ribosomal stalk, playing a central role in the interaction of the ribosome with GTP-bound translation factors. The chain is Large ribosomal subunit protein uL10 from Bacillus licheniformis (strain ATCC 14580 / DSM 13 / JCM 2505 / CCUG 7422 / NBRC 12200 / NCIMB 9375 / NCTC 10341 / NRRL NRS-1264 / Gibson 46).